An 80-amino-acid chain; its full sequence is Exodeoxyribonuclease 7 small subunit (80 aa).

Belongs to the XseB family. In terms of assembly, heterooligomer composed of large and small subunits.

Its subcellular location is the cytoplasm. It catalyses the reaction Exonucleolytic cleavage in either 5'- to 3'- or 3'- to 5'-direction to yield nucleoside 5'-phosphates.. Its function is as follows. Bidirectionally degrades single-stranded DNA into large acid-insoluble oligonucleotides, which are then degraded further into small acid-soluble oligonucleotides. The sequence is that of Exodeoxyribonuclease 7 small subunit from Aliivibrio fischeri (strain ATCC 700601 / ES114) (Vibrio fischeri).